An 808-amino-acid chain; its full sequence is Phospholipase D alpha 1 (808 aa).

A C2 domain is found at 1 to 125 (MSKVLLHGTL…LDGDEVDKWI (125 aa)). D186 contacts Ca(2+). In terms of domain architecture, PLD phosphodiesterase 1 spans 326-364 (TMFTHHQKIVVVDHELPRGGSQKRRVMSFVGGIDLCDGR). Active-site residues include H331, K333, and D338. H331 serves as a coordination point for a 1,2-diacyl-sn-glycero-3-phosphate. Residues H370 and H404 each contribute to the Ca(2+) site. A 1,2-diacyl-sn-glycero-3-phosphate is bound by residues Q520 and H659. Positions 654-681 (FMIYVHSKMMIVDDEYIIVGSANINQRS) constitute a PLD phosphodiesterase 2 domain. Catalysis depends on residues H659, K661, and D666. Position 720 (E720) interacts with Ca(2+).

Belongs to the phospholipase D family. C2-PLD subfamily. Interacts (via C2 domain) with CARDA (via RGD or KGE motifs). Ca(2+) serves as cofactor.

The enzyme catalyses a 1,2-diacyl-sn-glycero-3-phosphocholine + H2O = a 1,2-diacyl-sn-glycero-3-phosphate + choline + H(+). Its function is as follows. Hydrolyzes glycerol-phospholipids at the terminal phosphodiesteric bond. Plays an important role in various cellular processes. In Cynara cardunculus (Cardoon), this protein is Phospholipase D alpha 1.